The primary structure comprises 406 residues: Vitamin D3 dihydroxylase (406 aa).

A compositionally biased stretch (low complexity) spans 1-15 (MTDTATTPQTTDAPA). Positions 1–24 (MTDTATTPQTTDAPAFPSNRSCPY) are disordered. Thr81 contributes to the calciol binding site. Heme is bound by residues His103 and Arg107. The calciol site is built by Arg193, Ser236, and Ile293. Arg297, His353, and Cys355 together coordinate heme.

Belongs to the cytochrome P450 family. Requires heme as cofactor.

Its subcellular location is the cytoplasm. It catalyses the reaction calciol + 2 reduced [2Fe-2S]-[ferredoxin] + O2 + 2 H(+) = calcidiol + 2 oxidized [2Fe-2S]-[ferredoxin] + H2O. The catalysed reaction is calcidiol + 2 reduced [2Fe-2S]-[ferredoxin] + O2 + 2 H(+) = calcitriol + 2 oxidized [2Fe-2S]-[ferredoxin] + H2O. Functionally, involved in the metabolism of vitamin D3 (calciol) and of a number of sulfonylurea herbicides. Catalyzes the two-step hydroxylation (25- and 1-alpha-hydroxylation) of vitamin D3 (VD3) to yield its active form 1-alpha,25-dihydroxyvitamin D3 (calcitriol). The first step is the hydroxylation of the C-25 position of VD3 to produce 25-hydroxyvitamin D3 (calcidiol). The second reaction is the hydroxylation of the C1-alpha-position of calcidiol to produce calcitriol. It can also hydroxylate vitamin D2. This is Vitamin D3 dihydroxylase from Streptomyces griseolus.